Consider the following 568-residue polypeptide: Fumarate hydratase 2 (568 aa).

Cysteine 133 is a [4Fe-4S] cluster binding site. Residues 134–135 (QD), arginine 173, glycine 216, and 219–225 (NKAYLYQ) contribute to the (S)-malate site. [4Fe-4S] cluster is bound by residues cysteine 252 and cysteine 346. Residues arginine 421, 467 to 471 (TTAGR), and lysine 491 each bind (S)-malate.

The protein belongs to the class-I fumarase family. Homodimer. [4Fe-4S] cluster is required as a cofactor.

Its subcellular location is the cytoplasm. The protein localises to the cytosol. The enzyme catalyses (S)-malate = fumarate + H2O. Its activity is regulated as follows. Specifically and competitively inhibited by 2-thiomalate, which coordinates with the catalytic [4Fe-4S] cluster. Weakly inhibited by malonate. Cytosolic fumarate hydratase that catalyzes the reversible hydration of fumarate to (S)-malate. The sequence is that of Fumarate hydratase 2 from Leishmania major.